The following is a 182-amino-acid chain: Peptidyl-prolyl cis-trans isomerase C, mitochondrial (182 aa).

The transit peptide at 1–20 (MFKRSIIQQSRLFSNSASRL) directs the protein to the mitochondrion. In terms of domain architecture, PPIase cyclophilin-type spans 25-181 (FFDPAVNGTK…AEIVIEEAGE (157 aa)).

The protein belongs to the cyclophilin-type PPIase family.

The protein resides in the mitochondrion matrix. It catalyses the reaction [protein]-peptidylproline (omega=180) = [protein]-peptidylproline (omega=0). Its activity is regulated as follows. Inhibited by the immunosuppressant drug cyclosporin A and by SDZ NIM811, a PPIase inhibitor. Functionally, PPIases accelerate the folding of proteins. It catalyzes the cis-trans isomerization of proline imidic peptide bonds in oligopeptides. This isozyme is required for growth on lactate at high temperature. The protein is Peptidyl-prolyl cis-trans isomerase C, mitochondrial (CPR3) of Saccharomyces cerevisiae (strain ATCC 204508 / S288c) (Baker's yeast).